A 437-amino-acid chain; its full sequence is Photosystem II stability/assembly factor HCF136, chloroplastic (437 aa).

It belongs to the Ycf48 family.

The protein resides in the plastid. It is found in the chloroplast thylakoid membrane. Functionally, essential for photosystem II (PSII) biogenesis; required for assembly of an early intermediate in PSII assembly that includes D2 (psbD) and cytochrome b559. The protein is Photosystem II stability/assembly factor HCF136, chloroplastic of Cyanidioschyzon merolae (strain NIES-3377 / 10D) (Unicellular red alga).